The chain runs to 117 residues: MTRAKSGKISKNRHKKILKLAKGYRGRANSCFRVAIAKVEKALQYAYRDRRNRKRNFRGLWIQRINAAVRTHGLIYSQFMGTLKKAGIDIDRKVLAELAVNNSDGFASIVEKAKAHI.

Belongs to the bacterial ribosomal protein bL20 family.

Its function is as follows. Binds directly to 23S ribosomal RNA and is necessary for the in vitro assembly process of the 50S ribosomal subunit. It is not involved in the protein synthesizing functions of that subunit. The polypeptide is Large ribosomal subunit protein bL20 (Rickettsia canadensis (strain McKiel)).